Here is a 227-residue protein sequence, read N- to C-terminus: Cytochrome c oxidase subunit 2 (227 aa).

At 1-14 the chain is on the mitochondrial intermembrane side; sequence MAYPLQLGLQDATS. The chain crosses the membrane as a helical span at residues 15-45; that stretch reads PIMEELMNFHDHTLMIVFLISSLVLYIISLM. Residues 46–59 are Mitochondrial matrix-facing; sequence LTTKLTHTSTMDAQ. Residues 60 to 87 form a helical membrane-spanning segment; the sequence is EVETIWTILPAAILVLIALPSLRILYMM. The Mitochondrial intermembrane portion of the chain corresponds to 88–227; the sequence is DEINNPVLTV…YFENWSASMI (140 aa). Residues His-161, Cys-196, Glu-198, Cys-200, His-204, and Met-207 each contribute to the Cu cation site. Mg(2+) is bound at residue Glu-198. At Tyr-218 the chain carries Phosphotyrosine.

This sequence belongs to the cytochrome c oxidase subunit 2 family. Component of the cytochrome c oxidase (complex IV, CIV), a multisubunit enzyme composed of 14 subunits. The complex is composed of a catalytic core of 3 subunits MT-CO1, MT-CO2 and MT-CO3, encoded in the mitochondrial DNA, and 11 supernumerary subunits COX4I, COX5A, COX5B, COX6A, COX6B, COX6C, COX7A, COX7B, COX7C, COX8 and NDUFA4, which are encoded in the nuclear genome. The complex exists as a monomer or a dimer and forms supercomplexes (SCs) in the inner mitochondrial membrane with NADH-ubiquinone oxidoreductase (complex I, CI) and ubiquinol-cytochrome c oxidoreductase (cytochrome b-c1 complex, complex III, CIII), resulting in different assemblies (supercomplex SCI(1)III(2)IV(1) and megacomplex MCI(2)III(2)IV(2)). Found in a complex with TMEM177, COA6, COX18, COX20, SCO1 and SCO2. Interacts with TMEM177 in a COX20-dependent manner. Interacts with COX20. Interacts with COX16. Cu cation is required as a cofactor.

It is found in the mitochondrion inner membrane. It catalyses the reaction 4 Fe(II)-[cytochrome c] + O2 + 8 H(+)(in) = 4 Fe(III)-[cytochrome c] + 2 H2O + 4 H(+)(out). Component of the cytochrome c oxidase, the last enzyme in the mitochondrial electron transport chain which drives oxidative phosphorylation. The respiratory chain contains 3 multisubunit complexes succinate dehydrogenase (complex II, CII), ubiquinol-cytochrome c oxidoreductase (cytochrome b-c1 complex, complex III, CIII) and cytochrome c oxidase (complex IV, CIV), that cooperate to transfer electrons derived from NADH and succinate to molecular oxygen, creating an electrochemical gradient over the inner membrane that drives transmembrane transport and the ATP synthase. Cytochrome c oxidase is the component of the respiratory chain that catalyzes the reduction of oxygen to water. Electrons originating from reduced cytochrome c in the intermembrane space (IMS) are transferred via the dinuclear copper A center (CU(A)) of subunit 2 and heme A of subunit 1 to the active site in subunit 1, a binuclear center (BNC) formed by heme A3 and copper B (CU(B)). The BNC reduces molecular oxygen to 2 water molecules using 4 electrons from cytochrome c in the IMS and 4 protons from the mitochondrial matrix. This Micaelamys namaquensis (Namaqua rock rat) protein is Cytochrome c oxidase subunit 2 (MT-CO2).